A 422-amino-acid polypeptide reads, in one-letter code: GPI mannosyltransferase 1 (422 aa).

8 helical membrane-spanning segments follow: residues 10–30, 82–102, 162–182, 216–236, 282–302, 327–347, 352–372, and 385–405; these read TTPL…YGIY, FPAF…WLIL, IILG…PAIV, LKFG…MFAI, IESF…PLAL, SQYF…SSFL, LGIF…QQGY, and GLWL…GVII.

Belongs to the PIGM family.

The protein resides in the endoplasmic reticulum membrane. Its pathway is glycolipid biosynthesis; glycosylphosphatidylinositol-anchor biosynthesis. Its function is as follows. Mannosyltransferase involved in glycosylphosphatidylinositol-anchor biosynthesis. Transfers the first alpha-1,4-mannose to GlcN-acyl-PI during GPI precursor assembly. Required for cell wall integrity. The sequence is that of GPI mannosyltransferase 1 (GPI14) from Gibberella zeae (strain ATCC MYA-4620 / CBS 123657 / FGSC 9075 / NRRL 31084 / PH-1) (Wheat head blight fungus).